The chain runs to 229 residues: Sperm-associated microtubule inner protein 5 (229 aa).

The tract at residues 181–201 (PEFSGPGQTPPSEDPQAPRPC) is disordered.

Microtubule inner protein component of sperm flagellar doublet microtubules. In terms of tissue distribution, expressed in testis (at protein level).

The protein localises to the cytoplasm. It localises to the cytoskeleton. The protein resides in the flagellum axoneme. It is found in the nucleus. In terms of biological role, microtubule inner protein (MIP) part of the dynein-decorated doublet microtubules (DMTs) in flagellum axoneme. May serve to reinforce and thus stabilize the microtubule structure in the sperm flagella. This chain is Sperm-associated microtubule inner protein 5 (Spmip5), found in Mus musculus (Mouse).